The primary structure comprises 378 residues: Chloroplast stem-loop binding protein of 41 kDa b, chloroplastic (378 aa).

The N-terminal 50 residues, 1–50, are a transit peptide targeting the chloroplast; it reads MAKMMMLQQHQPSFSLLTSSLSDFNGAKLHLQVQYKRKVHQPKGALYVSA. Position 240 is a phosphoserine (Ser240).

Belongs to the NAD(P)-dependent epimerase/dehydratase family. Component of a complex made of CSP41A, CSP41B, ribosomes, and the plastid-encoded RNA polymerase. Interacts with CSP41A. Binds DNA when in complex with PRIN2. As to expression, highly expressed in seedlings, particularly in photosynthetically active organs. Mostly expressed in young and mature leaves, and, to a lower extent, in flowers. Low expression in etiolated seedlings compared to green seedlings.

The protein resides in the plastid. It is found in the chloroplast. The protein localises to the plastoglobule. Its subcellular location is the cytoplasm. Functionally, binds and cleaves RNA, particularly in stem-loops. Associates with pre-ribosomal particles in chloroplasts, and participates in chloroplast ribosomal RNA metabolism, probably during the final steps of 23S rRNA maturation. May enhance transcription by the plastid-encoded polymerase and translation in plastid via the stabilization of ribosome assembly intermediates. Required for chloroplast integrity. Involved in the regulation of the circadian system. Involved in the regulation of heteroglycans and monosaccharide mobilization. Required for full expression of genes transcribed by the plastid-encoded RNA polymerase (PEP). Essential for embryo development. The sequence is that of Chloroplast stem-loop binding protein of 41 kDa b, chloroplastic (CSP41B) from Arabidopsis thaliana (Mouse-ear cress).